Reading from the N-terminus, the 782-residue chain is MFPPSGSTGLIPPSHFQARPLSTLPRMAPTWLSDIPLVQPPGHQDVSERRLDTQRPQVTMWERDVSSDRQEPGRRGRSWGLEGSQALSQQAEVIARQLQELRRLEEEVRLLRETSLQQKMRLEAQAMELEALARAEKAGRAEAEGLRAALAGAEVVRKNLEEGSQRELEEVQRLHQEQLSSLTQAHEEALSSLTSKAEGLEKSLSSLETRRAGEAKELAEAQREAELLRKQLSKTQEDLEAQVTLVENLRKYVGEQVPSEVHSQTWELERQKLLETMQHLQEDRDSLQATVELLQVRVQSLTHILALQEEELTRKVQPSDSLEPEFTRKCQSLLNRWREKVFALMVQLKAQELEHSDSVKQLKGQVASLQEKVTSQSQEQAILQRSLQDKAAEVEVERMGAKGLQLELSRAQEARRRWQQQTASAEEQLRLVVNAVSSSQIWLETTMAKVEEAAAQLPSLNNRLSYAVRKVHTIRGLIARKLALAQLRQESCPLPPPVADVSLELQQLREERNRLDAELQLSARLIQQEVGRAREQGEAERQQLSKVAQQLEQELQQTQESLASLGLQLEVARQGQQESTEEAASLRQELTQQQELYGQALQEKVAEVETRLREQLSDTERRLNEARREHAKAVVSLRQIQRRAAQEKERSQELRRLQEEARKEEGQRLARRLQELERDKNLMLATLQQEGLLSRYKQQRLLTVLPSLLDKKKSVVSSPRPPECSASAPIAAAVPTRESIKGSLSVLLDDLQGLSEAISKEEAVCQGDNLDRCSSSNPQMSS.

2 stretches are compositionally biased toward basic and acidic residues: residues 62–74 and 208–218; these read ERDV…EPGR and ETRRAGEAKEL. 2 disordered regions span residues 62 to 82 and 177 to 218; these read ERDV…WGLE and EQLS…AKEL. Coiled coils occupy residues 82–314, 344–437, and 498–691; these read EGSQ…ELTR, LMVQ…NAVS, and VADV…QQEG.

The protein localises to the cytoplasm. It localises to the nucleus. In terms of biological role, may be a regulator of keratinocyte proliferation or differentiation. The polypeptide is Coiled-coil alpha-helical rod protein 1 (CCHCR1) (Pan troglodytes (Chimpanzee)).